Reading from the N-terminus, the 314-residue chain is 4-hydroxy-3-methylbut-2-enyl diphosphate reductase (314 aa).

Cysteine 12 contacts [4Fe-4S] cluster. (2E)-4-hydroxy-3-methylbut-2-enyl diphosphate is bound by residues histidine 41 and histidine 74. Dimethylallyl diphosphate contacts are provided by histidine 41 and histidine 74. Residues histidine 41 and histidine 74 each coordinate isopentenyl diphosphate. Cysteine 96 serves as a coordination point for [4Fe-4S] cluster. Histidine 124 serves as a coordination point for (2E)-4-hydroxy-3-methylbut-2-enyl diphosphate. Dimethylallyl diphosphate is bound at residue histidine 124. Histidine 124 provides a ligand contact to isopentenyl diphosphate. The Proton donor role is filled by glutamate 126. (2E)-4-hydroxy-3-methylbut-2-enyl diphosphate is bound at residue threonine 167. Cysteine 197 lines the [4Fe-4S] cluster pocket. (2E)-4-hydroxy-3-methylbut-2-enyl diphosphate-binding residues include serine 225, serine 226, asparagine 227, and serine 269. Residues serine 225, serine 226, asparagine 227, and serine 269 each contribute to the dimethylallyl diphosphate site. Residues serine 225, serine 226, asparagine 227, and serine 269 each coordinate isopentenyl diphosphate.

The protein belongs to the IspH family. [4Fe-4S] cluster serves as cofactor.

It catalyses the reaction isopentenyl diphosphate + 2 oxidized [2Fe-2S]-[ferredoxin] + H2O = (2E)-4-hydroxy-3-methylbut-2-enyl diphosphate + 2 reduced [2Fe-2S]-[ferredoxin] + 2 H(+). The catalysed reaction is dimethylallyl diphosphate + 2 oxidized [2Fe-2S]-[ferredoxin] + H2O = (2E)-4-hydroxy-3-methylbut-2-enyl diphosphate + 2 reduced [2Fe-2S]-[ferredoxin] + 2 H(+). It participates in isoprenoid biosynthesis; dimethylallyl diphosphate biosynthesis; dimethylallyl diphosphate from (2E)-4-hydroxy-3-methylbutenyl diphosphate: step 1/1. Its pathway is isoprenoid biosynthesis; isopentenyl diphosphate biosynthesis via DXP pathway; isopentenyl diphosphate from 1-deoxy-D-xylulose 5-phosphate: step 6/6. In terms of biological role, catalyzes the conversion of 1-hydroxy-2-methyl-2-(E)-butenyl 4-diphosphate (HMBPP) into a mixture of isopentenyl diphosphate (IPP) and dimethylallyl diphosphate (DMAPP). Acts in the terminal step of the DOXP/MEP pathway for isoprenoid precursor biosynthesis. The chain is 4-hydroxy-3-methylbut-2-enyl diphosphate reductase from Aliivibrio salmonicida (strain LFI1238) (Vibrio salmonicida (strain LFI1238)).